The primary structure comprises 128 residues: Aspartate 1-decarboxylase (128 aa).

Catalysis depends on Ser25, which acts as the Schiff-base intermediate with substrate; via pyruvic acid. Pyruvic acid (Ser) is present on Ser25. Substrate is bound at residue Thr57. Tyr58 (proton donor) is an active-site residue. Substrate is bound at residue 73–75; that stretch reads GAA.

It belongs to the PanD family. As to quaternary structure, heterooctamer of four alpha and four beta subunits. The cofactor is pyruvate. Post-translationally, is synthesized initially as an inactive proenzyme, which is activated by self-cleavage at a specific serine bond to produce a beta-subunit with a hydroxyl group at its C-terminus and an alpha-subunit with a pyruvoyl group at its N-terminus.

The protein localises to the cytoplasm. The catalysed reaction is L-aspartate + H(+) = beta-alanine + CO2. It participates in cofactor biosynthesis; (R)-pantothenate biosynthesis; beta-alanine from L-aspartate: step 1/1. Its function is as follows. Catalyzes the pyruvoyl-dependent decarboxylation of aspartate to produce beta-alanine. This Moorella thermoacetica (strain ATCC 39073 / JCM 9320) protein is Aspartate 1-decarboxylase.